A 490-amino-acid polypeptide reads, in one-letter code: Asparagine--tRNA ligase (490 aa).

Belongs to the class-II aminoacyl-tRNA synthetase family. As to quaternary structure, homodimer.

It localises to the cytoplasm. The catalysed reaction is tRNA(Asn) + L-asparagine + ATP = L-asparaginyl-tRNA(Asn) + AMP + diphosphate + H(+). The chain is Asparagine--tRNA ligase from Rhodopirellula baltica (strain DSM 10527 / NCIMB 13988 / SH1).